A 387-amino-acid chain; its full sequence is Anhydro-N-acetylmuramic acid kinase (387 aa).

9 to 16 (GTSADGVD) lines the ATP pocket.

The protein belongs to the anhydro-N-acetylmuramic acid kinase family.

The enzyme catalyses 1,6-anhydro-N-acetyl-beta-muramate + ATP + H2O = N-acetyl-D-muramate 6-phosphate + ADP + H(+). It participates in amino-sugar metabolism; 1,6-anhydro-N-acetylmuramate degradation. It functions in the pathway cell wall biogenesis; peptidoglycan recycling. Catalyzes the specific phosphorylation of 1,6-anhydro-N-acetylmuramic acid (anhMurNAc) with the simultaneous cleavage of the 1,6-anhydro ring, generating MurNAc-6-P. Is required for the utilization of anhMurNAc either imported from the medium or derived from its own cell wall murein, and thus plays a role in cell wall recycling. This Synechococcus sp. (strain WH7803) protein is Anhydro-N-acetylmuramic acid kinase.